Here is a 146-residue protein sequence, read N- to C-terminus: Ribosome maturation factor RimP (146 aa).

Belongs to the RimP family.

It is found in the cytoplasm. In terms of biological role, required for maturation of 30S ribosomal subunits. In Helicobacter pylori (strain P12), this protein is Ribosome maturation factor RimP.